The following is a 131-amino-acid chain: Large ribosomal subunit protein bL17 (131 aa).

This sequence belongs to the bacterial ribosomal protein bL17 family. Part of the 50S ribosomal subunit. Contacts protein L32.

This Polynucleobacter necessarius subsp. necessarius (strain STIR1) protein is Large ribosomal subunit protein bL17.